The sequence spans 111 residues: Latartoxin-2b (111 aa).

An N-terminal signal peptide occupies residues 1 to 19 (MKVLVIIALCFFILQTALS). Residues 20–43 (EDKYESFESYVEDLKSGNMKGEAR) constitute a propeptide, removed in mature form. Residues 40 to 43 (GEAR) carry the Processing quadruplet motif motif. 5 disulfide bridges follow: Cys-45–Cys-62, Cys-52–Cys-73, Cys-61–Cys-87, Cys-75–Cys-85, and Cys-78–Cys-99. Val-110 is modified (valine amide).

Belongs to the neurotoxin 19 (CSTX) family. 11 (latartoxin) subfamily. In terms of processing, contains 5 disulfide bonds. Cleavage of the propeptide depends on the processing quadruplet motif (XXXR, with at least one of X being E). Expressed by the venom gland.

It is found in the secreted. In terms of biological role, insect toxin. The polypeptide is Latartoxin-2b (Lachesana tarabaevi (Spider)).